We begin with the raw amino-acid sequence, 477 residues long: Cytochrome c oxidase subunit 1 (477 aa).

Residues 16–36 (VGTMYLMLGMWSGFGGLNLSW) form a helical membrane-spanning segment. Positions 41 and 46 each coordinate Ca(2+). Fe(II)-heme a is bound at residue H62. The next 6 helical transmembrane spans lie at 64 to 84 (IMMIFSFVMPVLIGGFGNWLL), 101 to 121 (FSFWVLPPALYLVIVSCFIDY), 149 to 171 (ILGLHLAGISSSAESINYLVTFL), 185 to 205 (LFVWALAVTSFLLLVSLPVLA), 236 to 256 (LFWFFGHPEVYVLILPGFGLV), and 269 to 289 (VFGSVAMMYAMISIGVLGFIV). H242 contacts Cu cation. Positions 242–246 (HPEVY) form a cross-link, 1'-histidyl-3'-tyrosine (His-Tyr). Y246 is a binding site for O2. Residues H292 and H293 each coordinate Cu cation. Transmembrane regions (helical) follow at residues 309–329 (AVTMLIAVPTGVKVFSWIATI) and 340–360 (TLWVLGFIMKFTMGGITGVIL). Residues H370 and D371 each contribute to the Mg(2+) site. H378 lines the heme a3 pocket. H380 provides a ligand contact to Fe(II)-heme a. Helical transmembrane passes span 382-402 (VLSMGAVFTIFAGYIHYFPFF) and 416-436 (FFLTFVGVNLTFFPQHFLGLG). A Ca(2+)-binding site is contributed by P443. A helical membrane pass occupies residues 455–475 (WSTIGCAMVMVSVSLFIHMQW).

The protein belongs to the heme-copper respiratory oxidase family. Component of the cytochrome c oxidase (complex IV, CIV), a multisubunit enzyme composed of a catalytic core of 3 subunits and several supernumerary subunits. The complex exists as a monomer or a dimer and forms supercomplexes (SCs) in the inner mitochondrial membrane with ubiquinol-cytochrome c oxidoreductase (cytochrome b-c1 complex, complex III, CIII). Requires heme as cofactor. Cu cation is required as a cofactor.

It localises to the mitochondrion inner membrane. It carries out the reaction 4 Fe(II)-[cytochrome c] + O2 + 8 H(+)(in) = 4 Fe(III)-[cytochrome c] + 2 H2O + 4 H(+)(out). Its pathway is energy metabolism; oxidative phosphorylation. Functionally, component of the cytochrome c oxidase, the last enzyme in the mitochondrial electron transport chain which drives oxidative phosphorylation. The respiratory chain contains 3 multisubunit complexes succinate dehydrogenase (complex II, CII), ubiquinol-cytochrome c oxidoreductase (cytochrome b-c1 complex, complex III, CIII) and cytochrome c oxidase (complex IV, CIV), that cooperate to transfer electrons derived from NADH and succinate to molecular oxygen, creating an electrochemical gradient over the inner membrane that drives transmembrane transport and the ATP synthase. Cytochrome c oxidase is the component of the respiratory chain that catalyzes the reduction of oxygen to water. Electrons originating from reduced cytochrome c in the intermembrane space (IMS) are transferred via the dinuclear copper A center (CU(A)) of subunit 2 and heme A of subunit 1 to the active site in subunit 1, a binuclear center (BNC) formed by heme A3 and copper B (CU(B)). The BNC reduces molecular oxygen to 2 water molecules using 4 electrons from cytochrome c in the IMS and 4 protons from the mitochondrial matrix. The protein is Cytochrome c oxidase subunit 1 (COI) of Pecten maximus (King scallop).